Consider the following 635-residue polypeptide: Threonine--tRNA ligase (635 aa).

Residues 1 to 61 (MIKITLKDGS…KEDAALELLT (61 aa)) form the TGS domain. Residues 242–532 (DHRKLGQELD…LTEHFAGAFP (291 aa)) are catalytic. Residues Cys333, His384, and His509 each coordinate Zn(2+).

The protein belongs to the class-II aminoacyl-tRNA synthetase family. As to quaternary structure, homodimer. It depends on Zn(2+) as a cofactor.

It localises to the cytoplasm. It carries out the reaction tRNA(Thr) + L-threonine + ATP = L-threonyl-tRNA(Thr) + AMP + diphosphate + H(+). Catalyzes the attachment of threonine to tRNA(Thr) in a two-step reaction: L-threonine is first activated by ATP to form Thr-AMP and then transferred to the acceptor end of tRNA(Thr). Also edits incorrectly charged L-seryl-tRNA(Thr). The polypeptide is Threonine--tRNA ligase (Desulforamulus reducens (strain ATCC BAA-1160 / DSM 100696 / MI-1) (Desulfotomaculum reducens)).